Reading from the N-terminus, the 115-residue chain is MNMLTALLINITLSLCLITIAFWLPQLNMYTEKASPYECGFDPMSSARLPFSMKFFLVAITFLLFDLEIALLLPLPWAMQINNIKVMMLTSFILVSVLALGLAYEWMQKGLEWTE.

3 helical membrane passes run 4–24 (LTAL…AFWL), 55–75 (FFLV…LLPL), and 86–106 (VMML…AYEW).

The protein belongs to the complex I subunit 3 family. Core subunit of respiratory chain NADH dehydrogenase (Complex I) which is composed of 45 different subunits. Interacts with TMEM186. Interacts with TMEM242.

Its subcellular location is the mitochondrion inner membrane. The catalysed reaction is a ubiquinone + NADH + 5 H(+)(in) = a ubiquinol + NAD(+) + 4 H(+)(out). In terms of biological role, core subunit of the mitochondrial membrane respiratory chain NADH dehydrogenase (Complex I) which catalyzes electron transfer from NADH through the respiratory chain, using ubiquinone as an electron acceptor. Essential for the catalytic activity of complex I. The sequence is that of NADH-ubiquinone oxidoreductase chain 3 from Isthmomys pirrensis (Mount Pirri Isthmus rat).